The chain runs to 550 residues: Thermosome subunit (550 aa).

The disordered stretch occupies residues 529–550 (KEKEGEKGGGGSEDFSSSSDLD). The segment covering 541-550 (EDFSSSSDLD) has biased composition (low complexity).

This sequence belongs to the TCP-1 chaperonin family. Forms an oligomeric complex of eight-membered rings.

Molecular chaperone; binds unfolded polypeptides in vitro, and has a weak ATPase activity. The sequence is that of Thermosome subunit (ths) from Pyrococcus abyssi (strain GE5 / Orsay).